The following is a 104-amino-acid chain: ATP-dependent Clp protease adapter protein ClpS (104 aa).

This sequence belongs to the ClpS family. In terms of assembly, binds to the N-terminal domain of the chaperone ClpA.

In terms of biological role, involved in the modulation of the specificity of the ClpAP-mediated ATP-dependent protein degradation. The polypeptide is ATP-dependent Clp protease adapter protein ClpS (Nitratidesulfovibrio vulgaris (strain ATCC 29579 / DSM 644 / CCUG 34227 / NCIMB 8303 / VKM B-1760 / Hildenborough) (Desulfovibrio vulgaris)).